The following is a 426-amino-acid chain: Dihydroorotase (426 aa).

The Zn(2+) site is built by His-58 and His-60. Substrate-binding positions include His-60–Arg-62 and Asn-92. Zn(2+) contacts are provided by Asp-150, His-177, and His-230. Asn-276 serves as a coordination point for substrate. Asp-303 contributes to the Zn(2+) binding site. Residue Asp-303 is part of the active site. Residues His-307 and Phe-321–Gly-322 contribute to the substrate site.

This sequence belongs to the metallo-dependent hydrolases superfamily. DHOase family. Class I DHOase subfamily. It depends on Zn(2+) as a cofactor.

It carries out the reaction (S)-dihydroorotate + H2O = N-carbamoyl-L-aspartate + H(+). Its pathway is pyrimidine metabolism; UMP biosynthesis via de novo pathway; (S)-dihydroorotate from bicarbonate: step 3/3. Functionally, catalyzes the reversible cyclization of carbamoyl aspartate to dihydroorotate. The protein is Dihydroorotase of Listeria monocytogenes serotype 4b (strain CLIP80459).